The following is a 112-amino-acid chain: Ribosome-binding factor A (112 aa).

This sequence belongs to the RbfA family. In terms of assembly, monomer. Binds 30S ribosomal subunits, but not 50S ribosomal subunits or 70S ribosomes.

It localises to the cytoplasm. Functionally, one of several proteins that assist in the late maturation steps of the functional core of the 30S ribosomal subunit. Associates with free 30S ribosomal subunits (but not with 30S subunits that are part of 70S ribosomes or polysomes). Required for efficient processing of 16S rRNA. May interact with the 5'-terminal helix region of 16S rRNA. The polypeptide is Ribosome-binding factor A (Mycoplasmopsis pulmonis (strain UAB CTIP) (Mycoplasma pulmonis)).